Reading from the N-terminus, the 506-residue chain is Maturase K (506 aa).

Belongs to the intron maturase 2 family. MatK subfamily.

The protein localises to the plastid. Its subcellular location is the chloroplast. Its function is as follows. Usually encoded in the trnK tRNA gene intron. Probably assists in splicing its own and other chloroplast group II introns. The protein is Maturase K of Pisum sativum (Garden pea).